We begin with the raw amino-acid sequence, 152 residues long: Deoxyuridine 5'-triphosphate nucleotidohydrolase (152 aa).

Substrate contacts are provided by residues 72 to 74 (RSG), Asn85, and 89 to 91 (TVD).

Belongs to the dUTPase family. The cofactor is Mg(2+).

The catalysed reaction is dUTP + H2O = dUMP + diphosphate + H(+). It participates in pyrimidine metabolism; dUMP biosynthesis; dUMP from dCTP (dUTP route): step 2/2. Functionally, this enzyme is involved in nucleotide metabolism: it produces dUMP, the immediate precursor of thymidine nucleotides and it decreases the intracellular concentration of dUTP so that uracil cannot be incorporated into DNA. This Nitrobacter hamburgensis (strain DSM 10229 / NCIMB 13809 / X14) protein is Deoxyuridine 5'-triphosphate nucleotidohydrolase.